Here is a 161-residue protein sequence, read N- to C-terminus: Small ribosomal subunit protein uS9 (161 aa).

Belongs to the universal ribosomal protein uS9 family.

The protein is Small ribosomal subunit protein uS9 of Bartonella bacilliformis (strain ATCC 35685 / KC583 / Herrer 020/F12,63).